A 179-amino-acid chain; its full sequence is Large ribosomal subunit protein uL5 (179 aa).

This sequence belongs to the universal ribosomal protein uL5 family. In terms of assembly, part of the 50S ribosomal subunit; part of the 5S rRNA/L5/L18/L25 subcomplex. Contacts the 5S rRNA and the P site tRNA. Forms a bridge to the 30S subunit in the 70S ribosome.

Functionally, this is one of the proteins that bind and probably mediate the attachment of the 5S RNA into the large ribosomal subunit, where it forms part of the central protuberance. In the 70S ribosome it contacts protein S13 of the 30S subunit (bridge B1b), connecting the 2 subunits; this bridge is implicated in subunit movement. Contacts the P site tRNA; the 5S rRNA and some of its associated proteins might help stabilize positioning of ribosome-bound tRNAs. In Dechloromonas aromatica (strain RCB), this protein is Large ribosomal subunit protein uL5.